An 88-amino-acid polypeptide reads, in one-letter code: uncharacterized protein (88 aa).

Positions 1-22 are cleaved as a signal peptide; it reads MGLTLKEHAEVCMALAESSASA.

This is an uncharacterized protein from Haemophilus influenzae (strain ATCC 51907 / DSM 11121 / KW20 / Rd).